The chain runs to 640 residues: Biosynthetic arginine decarboxylase (640 aa).

Residue K105 is modified to N6-(pyridoxal phosphate)lysine. Residue 290 to 300 (FDVGGGLAIDY) participates in substrate binding.

The protein belongs to the Orn/Lys/Arg decarboxylase class-II family. SpeA subfamily. Mg(2+) is required as a cofactor. The cofactor is pyridoxal 5'-phosphate.

The catalysed reaction is L-arginine + H(+) = agmatine + CO2. Functionally, catalyzes the biosynthesis of agmatine from arginine. The protein is Biosynthetic arginine decarboxylase of Vibrio vulnificus (strain CMCP6).